A 1659-amino-acid polypeptide reads, in one-letter code: Cortactin-binding protein 2 (1659 aa).

A disordered region spans residues 1–23 (MATDGASCEPDLSRAPEDAAGAA). Residues 119–276 (RKMQERMSAQ…EQLKRGSDSK (158 aa)) are a coiled coil. Disordered regions lie at residues 324–436 (LTMP…LHPG) and 450–474 (GNANDPDQNGNTTQSPPSRDVSPTS). 2 stretches are compositionally biased toward low complexity: residues 337-348 (ASANAKGSAAMA) and 381-392 (GPSTGLTPDPTS). Positions 405 to 418 (TAQTPGITPQNSQA) are enriched in polar residues. The residue at position 494 (R494) is an Asymmetric dimethylarginine. The interval 495–612 (FTGPQAGAPP…SSPQLPPKPS (118 aa)) is disordered. Residues 579–589 (TVASPPSSLPQ) show a composition bias toward polar residues. 5 ANK repeats span residues 705 to 735 (GRPTLLQQAAAQGNVTLLLMLLNEEGLDINY), 739 to 768 (DGHSALYSAAKNGHTDCVRLLLSAEAQVNA), 772 to 801 (NGFTPLCAAAAQGHFECVELLIAYDANINH), 805 to 834 (GGQTPLYLACKNGNKECIKLLLEAGTDRNV), and 838 to 867 (DGWTPVHAAVDTGNVDSLKLLMYHRVPAHG). The interval 869 to 893 (SFSEEESESGVFDLDGGGESPEGKS) is disordered. An ANK 6 repeat occupies 908–938 (EGWTAAHIAASKGFKNCLEILCRHGGLETER). The interval 1443-1478 (KKKGESGAWRKVNTSPRRKSGRFSLPTWNKPDLSTE) is disordered. A Phosphoserine modification is found at S1520. Residues 1613-1659 (RSKVTQCSQNTKRNSSSSNTRQIEINNNSKEENWNLHKNEHLEKPNK) are disordered. Over residues 1620–1634 (SQNTKRNSSSSNTRQ) the composition is skewed to low complexity. Residues 1641–1659 (SKEENWNLHKNEHLEKPNK) are compositionally biased toward basic and acidic residues.

Interacts with CTTN/cortactin SH3 domain. Interacts with STRN, STRN4/zinedin and MOB4/phocein; this interactions mediate the association with the STRIPAK core complex and may regulate dendritic spine distribution of the STRIPAK complex in hippocampal neurons. Activation of glutamate receptors weakens the interaction with STRN and STRN4.

It localises to the cytoplasm. The protein resides in the cell cortex. The protein localises to the cell projection. It is found in the dendritic spine. Regulates the dendritic spine distribution of CTTN/cortactin in hippocampal neurons, and thus controls dendritic spinogenesis and dendritic spine maintenance. Associates with the striatin-interacting phosphatase and kinase (STRIPAK) core complex to regulate dendritic spine distribution of the STRIPAK complex in hippocampal neurons. The sequence is that of Cortactin-binding protein 2 (CTTNBP2) from Saimiri boliviensis boliviensis (Bolivian squirrel monkey).